Reading from the N-terminus, the 239-residue chain is Probable transcriptional regulatory protein Bcer98_0465 (239 aa).

It belongs to the TACO1 family. YeeN subfamily.

It localises to the cytoplasm. The chain is Probable transcriptional regulatory protein Bcer98_0465 from Bacillus cytotoxicus (strain DSM 22905 / CIP 110041 / 391-98 / NVH 391-98).